Consider the following 228-residue polypeptide: UPF0758 protein H16_A3033 (228 aa).

Residues 102–224 form the MPN domain; it reads GFDGPAAVRN…IRSLADCCDR (123 aa). The Zn(2+) site is built by His173, His175, and Asp186. Residues 173–186 carry the JAMM motif motif; sequence HNHPRGTTAPSQSD.

The protein belongs to the UPF0758 family.

This is UPF0758 protein H16_A3033 from Cupriavidus necator (strain ATCC 17699 / DSM 428 / KCTC 22496 / NCIMB 10442 / H16 / Stanier 337) (Ralstonia eutropha).